We begin with the raw amino-acid sequence, 366 residues long: Protein FAM131A (366 aa).

Positions 342 to 366 are disordered; it reads QRQASDLASSGVVSLDEDEAEPEEQ. Over residues 356–366 the composition is skewed to acidic residues; sequence LDEDEAEPEEQ.

It belongs to the FAM131 family.

The sequence is that of Protein FAM131A (FAM131A) from Homo sapiens (Human).